Here is an 873-residue protein sequence, read N- to C-terminus: MTAQPPLHHRHHPYTLFGTSCHLSWYGLLEASVPIVQCLFLDLGGGRAEPRLHTFVVRGDRLPPAEVRAVHRASYAALASAVTTDADERRRGLEQRSAVLARVLLEGSALIRVLARTFTPVQIQTDASGVEILEAAPALGVETTALSNALSLFHVAKLVVIGSYPEVHEPRVVTHAAERVSEEYGTHAHKKLRRGYYAYDLAMSFRVGTHKYVLERDDEAVLARLFEVREVCFLRTCLRLVTPVGFVAVAVTDEQCCLLLQSAWTHLYDVLFRGFAGQPPLRDYLGPDLFETGAARSFFFPGFPPVPVYAVHGLHTLMRETALDAAAEVLSWCGLPDIVGSAGKLEVEPCALSLGVPEDEWQVFGTEAGGGAVRLNATAFRERPAGGDRRWLLPPLPRDDGDGENNVVEVSSSTGGAHPPSDDATFTVHVRDATLHRVLIVDLVERVLAKCVRARDFNPYVRYSHRLHTYAVCEKFIENLRFRSRRAFWQIQSLLGYISEHVTSACASAGLLWVLSRGHREFYVYDGYSGHGPVSAEVCVRTVVDCYWRKLFGGDDPGPTCRVQESAPGVLLVWGDERLVGPFNFFYGNGGAGGSPLHGVVGGFAAGHCGGACCAGCVVTHRHSSGGGGSGVGDADHASGGGLDAAAGSGHNGGSDRVSPSTPPAALGGCCCAAGGDWLSAVGHVLGRLPALLRERVSVSELEAVYREILFRFVARRNDVDFWLLRFQPGENEVRPHAGVIDCAPFHGVWAEQGQIIVQSRDTALAADIGYGVYVDKAFAMLTACVEVWARELLSSSTASTTTCSSSSVLSSALPSVTSSSSGTATVSPPSCSSSSATWLEERDEWVRSLAVDAQHAAKRVASEGLRFFRLNA.

Residues 394-422 (PPLPRDDGDGENNVVEVSSSTGGAHPPSD) are disordered.

This sequence belongs to the herpesviridae HEPA family. In terms of assembly, associates with the primase and the helicase to form the helicase-primase complex. Interacts with the origin-binding protein. Interacts with the polymerase catalytic subunit.

It is found in the host nucleus. In terms of biological role, component of the helicase/primase complex. Unwinds the DNA at the replication forks and generates single-stranded DNA for both leading and lagging strand synthesis. The primase synthesizes short RNA primers on the lagging strand that the polymerase presumably elongates using dNTPs. The primase-associated factor has no known catalytic activity in the complex and may serve to facilitate the formation of the replisome by directly interacting with the origin-binding protein and the polymerase. The protein is DNA helicase/primase complex-associated protein (UL102) of Human cytomegalovirus (strain Merlin) (HHV-5).